A 389-amino-acid chain; its full sequence is S-adenosylmethionine synthase (389 aa).

ATP is bound at residue His15. Residue Asp17 participates in Mg(2+) binding. Glu43 provides a ligand contact to K(+). L-methionine-binding residues include Glu56 and Gln99. The flexible loop stretch occupies residues 99–109; that stretch reads QSPDIAQGVNE. ATP is bound by residues 166–168, 234–235, Asp243, 249–250, Ala266, and Lys270; these read DAK, RF, and RK. Asp243 provides a ligand contact to L-methionine. L-methionine is bound at residue Lys274.

This sequence belongs to the AdoMet synthase family. In terms of assembly, homotetramer; dimer of dimers. Requires Mg(2+) as cofactor. K(+) serves as cofactor.

It localises to the cytoplasm. It catalyses the reaction L-methionine + ATP + H2O = S-adenosyl-L-methionine + phosphate + diphosphate. It functions in the pathway amino-acid biosynthesis; S-adenosyl-L-methionine biosynthesis; S-adenosyl-L-methionine from L-methionine: step 1/1. In terms of biological role, catalyzes the formation of S-adenosylmethionine (AdoMet) from methionine and ATP. The overall synthetic reaction is composed of two sequential steps, AdoMet formation and the subsequent tripolyphosphate hydrolysis which occurs prior to release of AdoMet from the enzyme. This chain is S-adenosylmethionine synthase, found in Laribacter hongkongensis (strain HLHK9).